The primary structure comprises 444 residues: Proline--tRNA ligase (444 aa).

It belongs to the class-II aminoacyl-tRNA synthetase family. ProS type 2 subfamily. As to quaternary structure, homodimer.

It localises to the cytoplasm. The enzyme catalyses tRNA(Pro) + L-proline + ATP = L-prolyl-tRNA(Pro) + AMP + diphosphate. Functionally, catalyzes the attachment of proline to tRNA(Pro) in a two-step reaction: proline is first activated by ATP to form Pro-AMP and then transferred to the acceptor end of tRNA(Pro). This Bradyrhizobium sp. (strain BTAi1 / ATCC BAA-1182) protein is Proline--tRNA ligase.